The following is a 587-amino-acid chain: Pyruvate decarboxylase 3 (587 aa).

Substrate contacts are provided by Asp-48 and His-135. The interval 415-496 (DSWFNCQKLR…FLINNGGYTI (82 aa)) is thiamine pyrophosphate binding. Mg(2+)-binding residues include Asp-464, Asn-491, and Gly-493. Glu-497 is a substrate binding site.

Belongs to the TPP enzyme family. As to quaternary structure, homotetramer. The cofactor is a metal cation. Thiamine diphosphate is required as a cofactor.

The enzyme catalyses a 2-oxocarboxylate + H(+) = an aldehyde + CO2. The polypeptide is Pyruvate decarboxylase 3 (PDC3) (Oryza sativa subsp. indica (Rice)).